Reading from the N-terminus, the 116-residue chain is Holo-[acyl-carrier-protein] synthase (116 aa).

Asp-5 and Glu-50 together coordinate Mg(2+).

This sequence belongs to the P-Pant transferase superfamily. AcpS family. Mg(2+) is required as a cofactor.

The protein localises to the cytoplasm. The catalysed reaction is apo-[ACP] + CoA = holo-[ACP] + adenosine 3',5'-bisphosphate + H(+). Its function is as follows. Transfers the 4'-phosphopantetheine moiety from coenzyme A to a Ser of acyl-carrier-protein. The sequence is that of Holo-[acyl-carrier-protein] synthase from Nitratiruptor sp. (strain SB155-2).